The sequence spans 538 residues: Syncytin-2 (538 aa).

The signal sequence occupies residues 1 to 15 (MGLLLLVLILTPSLA). Topologically, residues 16–478 (AYRHPDFPLL…GWLNWEGTWK (463 aa)) are extracellular. The short motif at 43–46 (CWLC) is the CXXC element. 3 disulfide bridges follow: C43-C46, C43-C439, and C431-C438. N-linked (GlcNAc...) asparagine glycans are attached at residues N133, N146, N177, N220, N241, N247, N312, and N332. The fusion peptide stretch occupies residues 354–374 (FIPLLAGLGILAGTGTGIAGI). The CKS-17 motif lies at 414 to 430 (LQNRRGLDMLTAAQGGI). A CX6CC motif is present at residues 431–439 (CLALDEKCC). A glycan (N-linked (GlcNAc...) asparagine) is linked at N443. The helical transmembrane segment at 479-499 (WFSWVLPLTGPLVSLLLLLLF) threads the bilayer. Residues 500–538 (GPCLLNLITQFVSSRLQAIKLQTNLSAGRRPRNIQESPF) are Cytoplasmic-facing.

The protein belongs to the gamma type-C retroviral envelope protein family. HERV class-I FRD env subfamily. In terms of assembly, the surface and transmembrane proteins form a heterodimer. They are attached by non-covalent interactions or by a labile interchain disulfide bond. In terms of processing, specific enzymatic cleavages in vivo yield the mature SU and TM proteins. Post-translationally, the CXXC motif is highly conserved across a broad range of retroviral envelope proteins. It is thought to participate in the formation of a labile disulfide bond possibly with the CX6CC motif present in the transmembrane protein.

The protein resides in the virion. It localises to the cell membrane. Functionally, this endogenous retroviral envelope protein has retained its original fusogenic properties and participates in trophoblast fusion and the formation of a syncytium during placenta morphogenesis. The interaction with MFSD2A is apparently important for this process. Its function is as follows. Endogenous envelope proteins may have kept, lost or modified their original function during evolution but this one can still make pseudotypes with MLV, HIV-1 or SIV-1 virions and confer infectivity. Retroviral envelope proteins mediate receptor recognition and membrane fusion during early infection. The surface protein mediates receptor recognition, while the transmembrane protein anchors the envelope heterodimer to the viral membrane through one transmembrane domain. The other hydrophobic domain, called fusion peptide, mediates fusion of the viral membrane with the target cell membrane. The protein is Syncytin-2 (ERVFRD-1) of Gorilla gorilla gorilla (Western lowland gorilla).